A 264-amino-acid chain; its full sequence is 4-oxalocrotonate decarboxylase (264 aa).

This sequence belongs to the hydratase/decarboxylase family.

The catalysed reaction is (3E)-2-oxohex-3-enedioate + H(+) = 2-oxopent-4-enoate + CO2. Its pathway is xenobiotic degradation; toluene degradation. The protein is 4-oxalocrotonate decarboxylase (xylI) of Pseudomonas putida (Arthrobacter siderocapsulatus).